The chain runs to 210 residues: Cilia- and flagella-associated protein 418 (210 aa).

Residues 1 to 77 form a required for interaction with FAM161A region; the sequence is MAKDLDELLD…LINEIFEEPN (77 aa). A disordered region spans residues 24–59; the sequence is LDLGERPKGGSGGGGTHSGDRNGAQEKDTLRSTETF. The segment covering 41 to 59 has biased composition (basic and acidic residues); it reads SGDRNGAQEKDTLRSTETF.

Interacts (via N-terminus) with FAM161A (via central region); the interaction is direct.

It localises to the cytoplasm. Its subcellular location is the photoreceptor inner segment. Functionally, may be involved in photoreceptor outer segment disk morphogenesis. This Rattus norvegicus (Rat) protein is Cilia- and flagella-associated protein 418.